We begin with the raw amino-acid sequence, 219 residues long: MIVIIPVSPINSLKTRLSEFLSEEERKYLLLNMLKDIKSALINLDTVVVSRDEEILNFAKKELNAKTIKEREKGLNNAIKQAFEEINQEEILIIPADIPLIKKHHIEDIINLSNHYDMIIAPSRGGGTNLLYLKSKNLIDLKYEGFSFLKHLKEAENKNLKYYIYDSFLVSVDINTPEDLGEIFIHGEKTHTKEYLKSLGIYVEPKHSSAGRFVVKRRD.

This sequence belongs to the CofC family. In terms of assembly, homodimer.

It catalyses the reaction (2S)-2-phospholactate + GTP + H(+) = (2S)-lactyl-2-diphospho-5'-guanosine + diphosphate. It functions in the pathway cofactor biosynthesis; coenzyme F420 biosynthesis. In terms of biological role, guanylyltransferase that catalyzes the activation of (2S)-2-phospholactate (2-PL) as (2S)-lactyl-2-diphospho-5'-guanosine, via the condensation of 2-PL with GTP. It is involved in the biosynthesis of coenzyme F420, a hydride carrier cofactor. The protein is 2-phospho-L-lactate guanylyltransferase of Methanocaldococcus vulcanius (strain ATCC 700851 / DSM 12094 / M7) (Methanococcus vulcanius).